A 901-amino-acid chain; its full sequence is Vacuolar protein sorting-associated protein 41 homolog (901 aa).

The tract at residues 1 to 37 (MDETHENEASDSFDPVFENSYHDDVTFNTEDDDEPPL) is disordered. A CHCR repeat occupies 618–760 (LRLLLDNADS…VAEFPAHFSQ (143 aa)). The RING-type; atypical zinc-finger motif lies at 839–893 (CSLCAQIIINSNQETTKKFSDIKVFKCGHIFHLACSTSEMERRQSIEEGLCIACS).

The protein belongs to the VPS41 family. As to quaternary structure, probable component of the homotypic fusion and vacuole protein sorting (HOPS) complex consisting of the core class C Vps proteins vps-11, vps-16, vps-18, and which further associates with vps-33.1, vps-39 and vps-41.

The protein resides in the endosome membrane. The protein localises to the late endosome membrane. It is found in the early endosome membrane. Its subcellular location is the lysosome membrane. It localises to the golgi apparatus. The protein resides in the trans-Golgi network. The protein localises to the cytoplasmic vesicle. It is found in the clathrin-coated vesicle. Its subcellular location is the cytoplasm. It localises to the cytosol. In terms of biological role, plays a role in vesicle-mediated protein trafficking to lysosomal compartments including the endocytic membrane transport pathways. Believed to act in part as a core component of the putative HOPS endosomal tethering complex which is proposed to be involved in the rab-5-to-rab-7 endosome conversion probably implicating sand-1, and via binding SNAREs and SNARE complexes to mediate tethering and docking events during SNARE-mediated membrane fusion. The HOPS complex is proposed to be recruited to rab-7 on the late endosomal membrane and to regulate late endocytic, phagocytic and autophagic traffic towards lysosomes. Within the HOPS complex, contributes to the normal development of gut granules in the adult intestine. May mediate the tethering of autophagosomes with lysosomes. Has a role in the negative regulation of apoptosis. Required for uptake of exogenous dsRNA which is used in experimental RNA silencing. The chain is Vacuolar protein sorting-associated protein 41 homolog from Caenorhabditis elegans.